The primary structure comprises 447 residues: Sensor protein VanSB (447 aa).

2 consecutive transmembrane segments (helical) span residues 10–30 (VFSY…TLFA) and 137–155 (GIVM…AYIF). The HAMP domain maps to 157-208 (RQMTTPIKALADSANKMANLKEVPPPLERKDELGALAHDMHSMYIRLKETIA). One can recognise a Histidine kinase domain in the interval 230-445 (AASHELKTPI…LFWLDLPPTS (216 aa)). A Phosphohistidine; by autocatalysis modification is found at H233.

The protein localises to the cell membrane. It catalyses the reaction ATP + protein L-histidine = ADP + protein N-phospho-L-histidine.. Its function is as follows. Member of the two-component regulatory system VanSB/VanRB. Activates the transcription of vanSB, vanYB and vanW in response to vancomycin which results in vancomycin resistance. VanSB may activate VanRB by phosphorylation. May also act as a phospho-VanRB phosphatase. This chain is Sensor protein VanSB (vanSB), found in Enterococcus faecalis (strain ATCC 700802 / V583).